Consider the following 329-residue polypeptide: 2-oxoglutarate-dependent dioxygenase htyE (329 aa).

Residues Asn175 to Pro289 form the Fe2OG dioxygenase domain. His201, Asp203, and His261 together coordinate Fe cation. Arg280 contacts 2-oxoglutarate.

The protein belongs to the iron/ascorbate-dependent oxidoreductase family. It depends on Fe(2+) as a cofactor.

Its pathway is antifungal biosynthesis. 2-oxoglutarate-dependent dioxygenase; part of the gene cluster that mediates the de novo generation of L-homotyrosine from acetyl-CoA and 4-hydroxyphenyl-pyruvate. L-homotyrosine is a building block of echinocandin B, a fungal lipidated cyclic hexapeptide that acts as an antifungal agent. L-homotyrosine 4-hydroxyphenyl-pyruvate first undergoes an aldol-type condensation by htyA with the C-2 of acetyl-CoA followed by the release of CoA to form 2-(4-hydroxybenzyl)-malate. This is followed by isomerization of 2-(4-hydroxy-benzyl)-malate to 3-(4-hydroxybenzyl)-malate by htyD. Thereafter, 3-(4-hydroxybenzyl)-malate undergoes decarboxylation and oxidation to form 2-oxo-4-(4-hydroxybenzyl)butanoic acid, coupled to reduction of NAD(+) to NADH by htyC. The product then undergoes transamination catalyzed by htyB to form L-homotyrosine. The protein is 2-oxoglutarate-dependent dioxygenase htyE of Aspergillus rugulosus (Emericella rugulosa).